We begin with the raw amino-acid sequence, 618 residues long: COMPASS component cclA (618 aa).

The disordered stretch occupies residues 1–91; sequence MSSIQPVGSS…KKAAVAPNSA (91 aa). Composition is skewed to low complexity over residues 8-19 and 37-49; these read GSSGPSSNINSP and NARS…SNAS. The segment covering 57–69 has biased composition (basic residues); sequence SKRNKRDSRKKRE. The B30.2/SPRY domain occupies 157 to 368; the sequence is IADPGFPHIK…QSNVFSTKHL (212 aa). Residues 588–618 form a disordered region; that stretch reads TLSVGHEGSPNPATPSAPLENTVPTEDVEMS.

Belongs to the cclA family. In terms of assembly, component of the COMPASS complex.

The protein localises to the nucleus. It is found in the chromosome. The protein resides in the telomere. Functionally, component of the COMPASS (Set1C) complex that specifically mono-, di- and trimethylates histone H3 to form H3K4me1/2/3, which subsequently plays a role in telomere length maintenance and transcription elongation regulation. Controls the production of several secondary metabolites, including gliotoxin, but does not contribute to pathogenicity. This Aspergillus fumigatus (strain ATCC MYA-4609 / CBS 101355 / FGSC A1100 / Af293) (Neosartorya fumigata) protein is COMPASS component cclA.